The chain runs to 405 residues: 5-azacytidine-induced protein 2 (405 aa).

Residues 1–198 (MDTLVEDDIC…TELQKARQTG (198 aa)) are homodimerization. Residues 40–197 (ALVTAYEDIK…RTELQKARQT (158 aa)) adopt a coiled-coil conformation. Residues 229-270 (SDNMQHAYWELKREMSNLHLVTQVQAELLRKLKTSAAVKKAC) form an interaction with TBK1 and IKBKE region. Serine 331 and serine 366 each carry phosphoserine. The segment at 357 to 377 (LEDNSWVFPSPPKSSETAFGE) is disordered.

In terms of assembly, homodimer. Interacts with IKBKE and TBK1. Interacts with TICAM1. Interacts with TAX1BP1. Interacts with CALCOCO2. Post-translationally, ubiquitinated via 'Lys-48'-linked polyubiquitination by TRIM38, leading to its degradation. In terms of tissue distribution, testis, ovary, heart, lung, kidney and brain. Expressed mainly in the spermatocytes or spermatids in the testis.

The protein resides in the cytoplasm. Adapter protein which binds TBK1 and IKBKE playing a role in antiviral innate immunity. Activates serine/threonine-protein kinase TBK1 and facilitates its oligomerization. Enhances the phosphorylation of NF-kappa-B p65 subunit RELA by TBK1. Promotes TBK1-induced as well as TNF-alpha or PMA-induced activation of NF-kappa-B. Participates in IFNB promoter activation via TICAM1. The protein is 5-azacytidine-induced protein 2 (Azi2) of Mus musculus (Mouse).